The chain runs to 472 residues: MKFHIITLGCPKNQVDSEGMSSILAAQGHTPVAHADDADVVVVNTCSFIAAAREETLDVLREVAARKTPGQYLVAAGCMAESHSALVAAAPGVDALLSTREWMRIGDVVDTLQREPAVAASSAAREIIPLSSAPASSDDLRVPGAYADWRTAPIRRRITGPSAYLKISDGCNLRCAFCTIPSFKGDMRSKAVGAILGEAQELADAGVKEIVLVAQHLTDYGRDLGLKDGLALLLDELCAVLPKDRWVRLMYAYPHGISERLIATMARHPQICHYLDMPLQHAHPETLRRMHRPPDSDRTRRLIADLRAAMPDIALRSTFIIGFPGETSAEFRALTAFLEEVQFDRVGVFRYSREPGTPAAALPDQIPQRVIERRWHTIMRLQQGISRQRNRRWVGRVIRVLVEGQGQTDDGRLLSVGRSFRDAPEVDGQVLFWGTAATGTFVDVRVTQALDYDLWGEMVEAPADDARSENGT.

Positions 1-114 constitute an MTTase N-terminal domain; it reads MKFHIITLGC…IGDVVDTLQR (114 aa). Residues cysteine 10, cysteine 46, cysteine 78, cysteine 171, cysteine 175, and cysteine 178 each coordinate [4Fe-4S] cluster. A Radical SAM core domain is found at 157–388; the sequence is RITGPSAYLK…MRLQQGISRQ (232 aa). Residues 391-460 form the TRAM domain; that stretch reads RRWVGRVIRV…DYDLWGEMVE (70 aa).

Belongs to the methylthiotransferase family. RimO subfamily. Requires [4Fe-4S] cluster as cofactor.

The protein resides in the cytoplasm. The catalysed reaction is L-aspartate(89)-[ribosomal protein uS12]-hydrogen + (sulfur carrier)-SH + AH2 + 2 S-adenosyl-L-methionine = 3-methylsulfanyl-L-aspartate(89)-[ribosomal protein uS12]-hydrogen + (sulfur carrier)-H + 5'-deoxyadenosine + L-methionine + A + S-adenosyl-L-homocysteine + 2 H(+). In terms of biological role, catalyzes the methylthiolation of an aspartic acid residue of ribosomal protein uS12. This chain is Ribosomal protein uS12 methylthiotransferase RimO, found in Roseiflexus sp. (strain RS-1).